The primary structure comprises 380 residues: 1-deoxy-D-xylulose 5-phosphate reductoisomerase (380 aa).

NADPH contacts are provided by T10, G11, S12, I13, G35, R36, N37, and N121. Residue K122 coordinates 1-deoxy-D-xylulose 5-phosphate. E123 is an NADPH binding site. D147 contacts Mn(2+). The 1-deoxy-D-xylulose 5-phosphate site is built by S148, E149, S173, and H196. Mn(2+) is bound at residue E149. Position 202 (G202) interacts with NADPH. 1-deoxy-D-xylulose 5-phosphate contacts are provided by S209, N214, K215, and E218. E218 is a binding site for Mn(2+).

It belongs to the DXR family. The cofactor is Mg(2+). Mn(2+) serves as cofactor.

It carries out the reaction 2-C-methyl-D-erythritol 4-phosphate + NADP(+) = 1-deoxy-D-xylulose 5-phosphate + NADPH + H(+). Its pathway is isoprenoid biosynthesis; isopentenyl diphosphate biosynthesis via DXP pathway; isopentenyl diphosphate from 1-deoxy-D-xylulose 5-phosphate: step 1/6. Its function is as follows. Catalyzes the NADPH-dependent rearrangement and reduction of 1-deoxy-D-xylulose-5-phosphate (DXP) to 2-C-methyl-D-erythritol 4-phosphate (MEP). This is 1-deoxy-D-xylulose 5-phosphate reductoisomerase from Agathobacter rectalis (strain ATCC 33656 / DSM 3377 / JCM 17463 / KCTC 5835 / VPI 0990) (Eubacterium rectale).